The sequence spans 589 residues: MEEKVSLKVRVQKLGTSLSNMVMPNIGAFIAWGVLTALFIADGYLPNEQLATVVGPMLTYLLPILIGYTGGYMIHGQRGAVVGSIATVGAITGSSVPMFIGAMVMGPLGGWTIKKFDEKFQEKIRPGFEMLVNNFSAGLVGFALLLLAFYAIGPVVSTLTGAVGNGVEAIVNARLLPMANIIIEPAKVLFLNNALNHGIFTPLGVEQVAQAGKSILFLLEANPGPGLGILLAYAVFGKGSAKSSSWGAMVIHFFGGIHEIYFPYVMMKPTLFLAAMAGGISGTFTFQLLDAGLKSPASPGSIIAIMATAPKGVWPHLNILLGVLVAAVVSFLIAALILHADKSTEDSLEAAQAATQAAKAQSKGQLVSTSVDAVVSTDSVEKIIFACDAGMGSSAMGASILRDKVKKAGLELPVSNQAISNLLDTPKTLIVTQEELTPRAKDKSPSAIHVSVDNFLASPRYDEIVASLTGASPIAEIEGDIPTSAPVDSQEIDLNHIDAVVVAYGKAQGTATMGCETIRAIFRNKNIRIPVSTAKISELGEFNSKNIMIVTTISLQAEVQQAAPNSQFLIVDSLVTTPEYDKMAARMYK.

The Cytoplasmic portion of the chain corresponds to 1–25; it reads MEEKVSLKVRVQKLGTSLSNMVMPN. The 334-residue stretch at 14 to 347 folds into the PTS EIIC type-2 domain; that stretch reads LGTSLSNMVM…LHADKSTEDS (334 aa). A helical membrane pass occupies residues 26–47; it reads IGAFIAWGVLTALFIADGYLPN. The Extracellular segment spans residues 48-51; the sequence is EQLA. Residues 52–72 traverse the membrane as a helical segment; that stretch reads TVVGPMLTYLLPILIGYTGGY. Over 73–135 the chain is Cytoplasmic; it reads MIHGQRGAVV…PGFEMLVNNF (63 aa). A helical transmembrane segment spans residues 136–157; that stretch reads SAGLVGFALLLLAFYAIGPVVS. The Extracellular segment spans residues 158–166; it reads TLTGAVGNG. Residues 167 to 187 traverse the membrane as a helical segment; it reads VEAIVNARLLPMANIIIEPAK. Over 188–274 the chain is Cytoplasmic; the sequence is VLFLNNALNH…VMMKPTLFLA (87 aa). A helical membrane pass occupies residues 275 to 294; sequence AMAGGISGTFTFQLLDAGLK. Topologically, residues 295–316 are extracellular; that stretch reads SPASPGSIIAIMATAPKGVWPH. Residues 317–338 traverse the membrane as a helical segment; sequence LNILLGVLVAAVVSFLIAALIL. Over 339–589 the chain is Cytoplasmic; the sequence is HADKSTEDSL…YDKMAARMYK (251 aa). The PTS EIIB type-2 domain occupies 381 to 476; that stretch reads EKIIFACDAG…SLTGASPIAE (96 aa). C387 functions as the Phosphocysteine intermediate; for EIIB activity in the catalytic mechanism. Phosphocysteine; by EIIA is present on C387.

As to quaternary structure, homodimer.

The protein localises to the cell membrane. The catalysed reaction is D-mannitol(out) + N(pros)-phospho-L-histidyl-[protein] = D-mannitol 1-phosphate(in) + L-histidyl-[protein]. Its function is as follows. The phosphoenolpyruvate-dependent sugar phosphotransferase system (sugar PTS), a major carbohydrate active transport system, catalyzes the phosphorylation of incoming sugar substrates concomitantly with their translocation across the cell membrane. The enzyme II CmtAB PTS system is involved in D-mannitol transport. In Streptococcus pneumoniae (strain ATCC BAA-255 / R6), this protein is PTS system mannitol-specific EIICB component (mtlA).